The chain runs to 54 residues: uncharacterized protein (54 aa).

The tract at residues 34–54 is disordered; it reads NNREKQKSGKLRELRRGFKTF.

This is an uncharacterized protein from Acidianus two-tailed virus (ATV).